Reading from the N-terminus, the 500-residue chain is NAD(P)H-quinone oxidoreductase chain 4, chloroplastic (500 aa).

The next 14 membrane-spanning stretches (helical) occupy residues 4 to 24 (FPWLTIIVVFPIFAGSLIFFL), 35 to 55 (YTICICILELLLTTYAFCYHF), 87 to 107 (IGPILLTGFITTLATLAAWPV), 113 to 130 (LFHFLMLAMYSGQIGSFS), 134 to 154 (LLLFFIMWELELIPVYLLLCM), 167 to 187 (FILYTAGGSVFLLMGVLGLAL), 208 to 228 (VLEIIFYIGFFIAFAVKSPII), 242 to 262 (HYSTCMLLAGILLKMGAYGLI), 274 to 294 (SIFSPWLMIIGTIQIIYAALT), 305 to 325 (IAYSSVSHMGFIIIGISSLTD), 330 to 350 (GALLQIISHGFIGAALFFLAG), 386 to 406 (LALPGMSGFVAELIVFFGIIT), 411 to 431 (LLIPKILITFVMAIGMILTPI), and 462 to 482 (LFLSISIFLPVIGIGIYPDFV).

The protein belongs to the complex I subunit 4 family.

It localises to the plastid. Its subcellular location is the chloroplast thylakoid membrane. The enzyme catalyses a plastoquinone + NADH + (n+1) H(+)(in) = a plastoquinol + NAD(+) + n H(+)(out). It carries out the reaction a plastoquinone + NADPH + (n+1) H(+)(in) = a plastoquinol + NADP(+) + n H(+)(out). This Nicotiana tabacum (Common tobacco) protein is NAD(P)H-quinone oxidoreductase chain 4, chloroplastic (ndhD).